The chain runs to 62 residues: Potassium channel toxin alpha-KTx Tx790 (62 aa).

The first 18 residues, 1–18, serve as a signal peptide directing secretion; sequence MQKLFIVLVLFCILRLDA. Disulfide bonds link C28–C46, C33–C59, and C37–C61.

This sequence belongs to the short scorpion toxin superfamily. Potassium channel inhibitor family. Alpha-KTx 23 subfamily. As to expression, expressed by the venom gland.

Its subcellular location is the secreted. In terms of biological role, may block potassium channels. In Buthus israelis (Israeli scorpion), this protein is Potassium channel toxin alpha-KTx Tx790.